A 313-amino-acid chain; its full sequence is Porphobilinogen deaminase (313 aa).

C242 is modified (S-(dipyrrolylmethanemethyl)cysteine).

This sequence belongs to the HMBS family. In terms of assembly, monomer. Dipyrromethane is required as a cofactor.

It catalyses the reaction 4 porphobilinogen + H2O = hydroxymethylbilane + 4 NH4(+). It functions in the pathway porphyrin-containing compound metabolism; protoporphyrin-IX biosynthesis; coproporphyrinogen-III from 5-aminolevulinate: step 2/4. Its function is as follows. Tetrapolymerization of the monopyrrole PBG into the hydroxymethylbilane pre-uroporphyrinogen in several discrete steps. The sequence is that of Porphobilinogen deaminase from Pseudomonas putida (strain ATCC 47054 / DSM 6125 / CFBP 8728 / NCIMB 11950 / KT2440).